Reading from the N-terminus, the 365-residue chain is 3-isopropylmalate dehydrogenase (365 aa).

Residue 78–89 (GPKWGTGKVRPE) participates in NAD(+) binding. Substrate is bound by residues Arg96, Arg106, Arg135, and Asp224. Residues Asp224, Asp249, and Asp253 each coordinate Mg(2+). 289 to 301 (GSAPDISGKGIVN) contacts NAD(+).

Belongs to the isocitrate and isopropylmalate dehydrogenases family. Homodimer. The cofactor is Mg(2+). Mn(2+) serves as cofactor.

It localises to the cytoplasm. The catalysed reaction is (2R,3S)-3-isopropylmalate + NAD(+) = 4-methyl-2-oxopentanoate + CO2 + NADH. It functions in the pathway amino-acid biosynthesis; L-leucine biosynthesis; L-leucine from 3-methyl-2-oxobutanoate: step 3/4. Functionally, catalyzes the oxidation of 3-carboxy-2-hydroxy-4-methylpentanoate (3-isopropylmalate) to 3-carboxy-4-methyl-2-oxopentanoate. The product decarboxylates to 4-methyl-2 oxopentanoate. The sequence is that of 3-isopropylmalate dehydrogenase (LEUC) from Zymoseptoria tritici (Speckled leaf blotch fungus).